A 645-amino-acid chain; its full sequence is 1,4-alpha-glucan branching enzyme GlgB (645 aa).

Catalysis depends on D309, which acts as the Nucleophile. Residue E352 is the Proton donor of the active site. The interval 621–645 (MRKGSKKQDGKKAELRSNATSRRKR) is disordered. A compositionally biased stretch (basic and acidic residues) spans 626-635 (KKQDGKKAEL).

The protein belongs to the glycosyl hydrolase 13 family. GlgB subfamily. In terms of assembly, monomer.

It carries out the reaction Transfers a segment of a (1-&gt;4)-alpha-D-glucan chain to a primary hydroxy group in a similar glucan chain.. Its pathway is glycan biosynthesis; glycogen biosynthesis. In terms of biological role, catalyzes the formation of the alpha-1,6-glucosidic linkages in glycogen by scission of a 1,4-alpha-linked oligosaccharide from growing alpha-1,4-glucan chains and the subsequent attachment of the oligosaccharide to the alpha-1,6 position. The sequence is that of 1,4-alpha-glucan branching enzyme GlgB from Bacillus cytotoxicus (strain DSM 22905 / CIP 110041 / 391-98 / NVH 391-98).